Reading from the N-terminus, the 384-residue chain is Spermatogenesis-associated protein 32 (384 aa).

The tract at residues 23-60 (RDDLSQHQIQEEQELEADMLEQKPQLQVDLDLDPDPDP) is disordered. Phosphoserine is present on residues Ser-167 and Ser-170. 3 disordered regions span residues 211–232 (DAHS…SSDL), 284–310 (VEER…LKSW), and 340–366 (LLQP…EKEN). Over residues 214–231 (SAPPTTSSQAPSPLLSSD) the composition is skewed to low complexity. Positions 353–366 (SKEDSVPPGKEKEN) are enriched in basic and acidic residues.

In terms of assembly, interacts with syntaxin-1 and ACTB. Detected in testis, and on the acrosomal cap of spermatids.

The protein is Spermatogenesis-associated protein 32 (SPATA32) of Homo sapiens (Human).